The following is a 725-amino-acid chain: Catalase-peroxidase (725 aa).

Residues 1–20 (MSSEAKCPFPHAANRSRSNQ) form a disordered region. The tryptophyl-tyrosyl-methioninium (Trp-Tyr) (with M-241) cross-link spans 91 to 215 (WHATGTYRTM…LSATHMGLIY (125 aa)). Catalysis depends on His92, which acts as the Proton acceptor. Residues 215–241 (YVNPEGPDGSGDYMAAAKDIRATFYRM) constitute a cross-link (tryptophyl-tyrosyl-methioninium (Tyr-Met) (with W-91)). His256 provides a ligand contact to heme b.

This sequence belongs to the peroxidase family. Peroxidase/catalase subfamily. As to quaternary structure, homodimer or homotetramer. It depends on heme b as a cofactor. Formation of the three residue Trp-Tyr-Met cross-link is important for the catalase, but not the peroxidase activity of the enzyme.

It carries out the reaction H2O2 + AH2 = A + 2 H2O. It catalyses the reaction 2 H2O2 = O2 + 2 H2O. Functionally, bifunctional enzyme with both catalase and broad-spectrum peroxidase activity. In Janthinobacterium sp. (strain Marseille) (Minibacterium massiliensis), this protein is Catalase-peroxidase.